A 691-amino-acid chain; its full sequence is Elongation factor G 2 (691 aa).

The tr-type G domain occupies 8–287 (DRYRNIGIMA…AVVDYLPSPL (280 aa)). Residues 17–24 (AHIDAGKT), 85–89 (DTPGH), and 139–142 (NKMD) contribute to the GTP site.

It belongs to the TRAFAC class translation factor GTPase superfamily. Classic translation factor GTPase family. EF-G/EF-2 subfamily.

The protein resides in the cytoplasm. In terms of biological role, catalyzes the GTP-dependent ribosomal translocation step during translation elongation. During this step, the ribosome changes from the pre-translocational (PRE) to the post-translocational (POST) state as the newly formed A-site-bound peptidyl-tRNA and P-site-bound deacylated tRNA move to the P and E sites, respectively. Catalyzes the coordinated movement of the two tRNA molecules, the mRNA and conformational changes in the ribosome. In Myxococcus xanthus (strain DK1622), this protein is Elongation factor G 2.